The primary structure comprises 380 residues: Chaperone protein DnaJ (380 aa).

The J domain occupies 4–68 (DFYSVLGVSR…EKRRMYDQMG (65 aa)). A compositionally biased stretch (basic and acidic residues) spans 27-87 (KASEYHPDVS…RGATDTDRGR (61 aa)). Residues 27-126 (KASEYHPDVS…SRSGPRQGSD (100 aa)) are disordered. The segment covering 88–100 (GGMGGMGGGGMGG) has biased composition (gly residues). A compositionally biased stretch (low complexity) spans 115-124 (SQSRSGPRQG). A CR-type zinc finger spans residues 141–223 (GVTKQLTVTR…CRGDGQVRNE (83 aa)). The Zn(2+) site is built by cysteine 154, cysteine 157, cysteine 171, cysteine 174, cysteine 197, cysteine 200, cysteine 211, and cysteine 214. CXXCXGXG motif repeat units lie at residues 154 to 161 (CPDCDGAG), 171 to 178 (CSACDGRG), 197 to 204 (CPQCDGKG), and 211 to 218 (CSTCRGDG).

The protein belongs to the DnaJ family. As to quaternary structure, homodimer. Zn(2+) serves as cofactor.

It localises to the cytoplasm. In terms of biological role, participates actively in the response to hyperosmotic and heat shock by preventing the aggregation of stress-denatured proteins and by disaggregating proteins, also in an autonomous, DnaK-independent fashion. Unfolded proteins bind initially to DnaJ; upon interaction with the DnaJ-bound protein, DnaK hydrolyzes its bound ATP, resulting in the formation of a stable complex. GrpE releases ADP from DnaK; ATP binding to DnaK triggers the release of the substrate protein, thus completing the reaction cycle. Several rounds of ATP-dependent interactions between DnaJ, DnaK and GrpE are required for fully efficient folding. Also involved, together with DnaK and GrpE, in the DNA replication of plasmids through activation of initiation proteins. The sequence is that of Chaperone protein DnaJ from Natronomonas pharaonis (strain ATCC 35678 / DSM 2160 / CIP 103997 / JCM 8858 / NBRC 14720 / NCIMB 2260 / Gabara) (Halobacterium pharaonis).